We begin with the raw amino-acid sequence, 170 residues long: Probable inosine/xanthosine triphosphatase (170 aa).

Glu-31 is a Mg(2+) binding site.

The protein belongs to the YjjX NTPase family. As to quaternary structure, homodimer. It depends on Mg(2+) as a cofactor. Mn(2+) is required as a cofactor.

It catalyses the reaction XTP + H2O = XDP + phosphate + H(+). The enzyme catalyses ITP + H2O = IDP + phosphate + H(+). Phosphatase that hydrolyzes non-canonical purine nucleotides such as XTP and ITP to their respective diphosphate derivatives. Probably excludes non-canonical purines from DNA/RNA precursor pool, thus preventing their incorporation into DNA/RNA and avoiding chromosomal lesions. This chain is Probable inosine/xanthosine triphosphatase, found in Oceanobacillus iheyensis (strain DSM 14371 / CIP 107618 / JCM 11309 / KCTC 3954 / HTE831).